A 2284-amino-acid polypeptide reads, in one-letter code: RNA1 polyprotein (2284 aa).

Over 567–1172 (CTAEEIFRMH…LVENYSLLLT (606 aa)) the chain is Cytoplasmic. Residues 750 to 918 (VSKLEEVHQR…DNTHFTPRAY (169 aa)) enclose the SF3 helicase domain. 780–787 (GASQSGKT) is an ATP binding site. The helical transmembrane segment at 1173 to 1193 (LVAILVLIATAYSLISTLIGL) threads the bilayer. Topologically, residues 1194-1216 (AGCSSFAGGMVALNHVSNASIPC) are lumenal. Ser1217 is subject to O-(5'-phospho-RNA)-serine. In terms of domain architecture, Peptidase C3 spans 1242-1457 (GPAQGQGDHE…SVIPSYSSSF (216 aa)). Active-site for picornain 3C-like protease activity residues include His1283, Glu1327, and Cys1419. The region spanning 1727–1851 (DVGYNCDYKG…TVSQSIMTSF (125 aa)) is the RdRp catalytic domain.

This sequence belongs to the nepoviruses RNA1 polyprotein family. In terms of processing, specific enzymatic cleavages by picornain 3C-like protease in vivo yield mature proteins. Picornain 3C-like protease is autocatalytically processed. VPg is uridylylated by the polymerase and is covalently linked to the 5'-end of genomic RNA. This uridylylated form acts as a nucleotide-peptide primer for the polymerase.

The protein localises to the host endoplasmic reticulum lumen. Its subcellular location is the host endoplasmic reticulum membrane. The enzyme catalyses RNA(n) + a ribonucleoside 5'-triphosphate = RNA(n+1) + diphosphate. In terms of biological role, picornain 3C-like protease is a thiol protease that cleaves the P1 and P2 polyproteins. This chain is RNA1 polyprotein, found in Vitis vinifera (Grape).